Consider the following 101-residue polypeptide: Aspartyl/glutamyl-tRNA(Asn/Gln) amidotransferase subunit C (101 aa).

The disordered stretch occupies residues 75-101; that stretch reads QEALSGAPDAEEQRFRVPRILDEDVAS. Residues 85 to 101 are compositionally biased toward basic and acidic residues; it reads EEQRFRVPRILDEDVAS.

This sequence belongs to the GatC family. As to quaternary structure, heterotrimer of A, B and C subunits.

It carries out the reaction L-glutamyl-tRNA(Gln) + L-glutamine + ATP + H2O = L-glutaminyl-tRNA(Gln) + L-glutamate + ADP + phosphate + H(+). It catalyses the reaction L-aspartyl-tRNA(Asn) + L-glutamine + ATP + H2O = L-asparaginyl-tRNA(Asn) + L-glutamate + ADP + phosphate + 2 H(+). Functionally, allows the formation of correctly charged Asn-tRNA(Asn) or Gln-tRNA(Gln) through the transamidation of misacylated Asp-tRNA(Asn) or Glu-tRNA(Gln) in organisms which lack either or both of asparaginyl-tRNA or glutaminyl-tRNA synthetases. The reaction takes place in the presence of glutamine and ATP through an activated phospho-Asp-tRNA(Asn) or phospho-Glu-tRNA(Gln). In Salinispora arenicola (strain CNS-205), this protein is Aspartyl/glutamyl-tRNA(Asn/Gln) amidotransferase subunit C.